Reading from the N-terminus, the 422-residue chain is Serine--tRNA ligase (422 aa).

Position 238-240 (238-240 (TSE)) interacts with L-serine. An ATP-binding site is contributed by 269–271 (RKE). E292 contributes to the L-serine binding site. 356 to 359 (EISS) contacts ATP. L-serine is bound at residue S390.

The protein belongs to the class-II aminoacyl-tRNA synthetase family. Type-1 seryl-tRNA synthetase subfamily. As to quaternary structure, homodimer. The tRNA molecule binds across the dimer.

Its subcellular location is the cytoplasm. It catalyses the reaction tRNA(Ser) + L-serine + ATP = L-seryl-tRNA(Ser) + AMP + diphosphate + H(+). The catalysed reaction is tRNA(Sec) + L-serine + ATP = L-seryl-tRNA(Sec) + AMP + diphosphate + H(+). Its pathway is aminoacyl-tRNA biosynthesis; selenocysteinyl-tRNA(Sec) biosynthesis; L-seryl-tRNA(Sec) from L-serine and tRNA(Sec): step 1/1. Functionally, catalyzes the attachment of serine to tRNA(Ser). Is also able to aminoacylate tRNA(Sec) with serine, to form the misacylated tRNA L-seryl-tRNA(Sec), which will be further converted into selenocysteinyl-tRNA(Sec). This is Serine--tRNA ligase from Helicobacter hepaticus (strain ATCC 51449 / 3B1).